The primary structure comprises 281 residues: Arylamine N-acetyltransferase / N-hydroxyarylamine O-acetyltransferase (281 aa).

Cys69 functions as the Acyl-thioester intermediate in the catalytic mechanism. Catalysis depends on residues His107 and Asp122.

Belongs to the arylamine N-acetyltransferase family. Monomer and homodimer.

The protein resides in the cytoplasm. It catalyses the reaction an arylamine + acetyl-CoA = an N-acetylarylamine + CoA. The enzyme catalyses an N-hydroxyarylamine + acetyl-CoA = an N-acetoxyarylamine + CoA. Its activity is regulated as follows. Inhibited by N-ethylmaleimide and iodoacetamide. In terms of biological role, catalyzes both the acetyl-CoA-dependent N-acetylation of aromatic amines and the O-acetylation of N-hydroxyarylamines. In vitro, catalyzes the O-acetylation of N-hydroxy-Glu-P-1, and the N-acetylation of isoniazid and 2-aminofluorene. This is Arylamine N-acetyltransferase / N-hydroxyarylamine O-acetyltransferase (nhoA) from Salmonella typhimurium (strain LT2 / SGSC1412 / ATCC 700720).